The following is a 532-amino-acid chain: All-trans-retinyl ester 13-cis isomerohydrolase (532 aa).

C112 is lipidated: S-palmitoyl cysteine; in membrane form. Positions 180, 241, and 313 each coordinate Fe cation. Residue C329 is the site of S-palmitoyl cysteine; in membrane form attachment. Residue H527 participates in Fe cation binding.

It belongs to the carotenoid oxygenase family. Requires Fe(2+) as cofactor. In terms of processing, palmitoylated. As to expression, predominantly expressed in brain. Expressed at a low level in the eye.

It is found in the cytoplasm. The protein resides in the cell membrane. The enzyme catalyses an all-trans-retinyl ester + H2O = 13-cis-retinol + a fatty acid + H(+). It catalyses the reaction lutein = (3R,3'S)-zeaxanthin. Functionally, specifically generates 13-cis retinol, a stereoisomeric form of retinoic acid. Capable of catalyzing the isomerization of lutein to meso-zeaxanthin an eye-specific carotenoid. The protein is All-trans-retinyl ester 13-cis isomerohydrolase (rpe65b) of Danio rerio (Zebrafish).